We begin with the raw amino-acid sequence, 901 residues long: Alpha-actinin-3 (901 aa).

N-acetylmethionine is present on Met-1. Positions 1–261 (MMMVMQPEGL…IMTYVSCFYH (261 aa)) are actin-binding. Calponin-homology (CH) domains are found at residues 45-149 (KQQR…LRFA) and 158-264 (TSAK…HAFA). Spectrin repeat units lie at residues 288–398 (KLME…WLLS), 408–513 (HLAE…ALER), 523–634 (RLQL…TLQE), and 644–747 (RLRR…EVEN). EF-hand domains lie at 760-795 (EQLN…MGYD) and 796-831 (LGEV…ETAE). 6 residues coordinate Ca(2+): Asp-773, Asn-777, Met-779, Asp-784, Asp-809, and Asn-811.

This sequence belongs to the alpha-actinin family. In terms of assembly, homodimer; antiparallel. Also forms heterodimers with ACTN2. Interacts with MYOZ1. In terms of tissue distribution, expression restricted to fast (type 2) skeletal muscle fibers (at protein level).

In terms of biological role, F-actin cross-linking protein which is thought to anchor actin to a variety of intracellular structures. This is a bundling protein. This chain is Alpha-actinin-3 (ACTN3), found in Homo sapiens (Human).